The chain runs to 309 residues: MSIRIIPQDELGSSEKRTADMIPPLLFPRLKNVYNRRAERLRELAESNPLGDYLRFAALIAHAQEVVLYDHPLEMDLTARIKEANEQGKPPLDIHVLPRDKHWQKLLHSLIAELKPEMSGPALAVIENLEKASDQELEQMASALFDSDFSYVSSDKAPFIWAALSLYWAQMASLIPGKARAEYGEARQYCPVCGSMPVSSVVQIGTTQGLRYLHCNLCETEWHVVRVKCSNCEQSRDLHYWSLENEQAAVKTESCGDCGTYLKILYQEKDPKVEAVADDLASLVLDARMEQEGFARSSINPFLFPGEGE.

This sequence belongs to the FdhE family.

Its subcellular location is the cytoplasm. Functionally, necessary for formate dehydrogenase activity. The sequence is that of Protein FdhE from Salmonella arizonae (strain ATCC BAA-731 / CDC346-86 / RSK2980).